We begin with the raw amino-acid sequence, 667 residues long: Mannosyl-oligosaccharide alpha-1,2-mannosidase IA (667 aa).

The Cytoplasmic portion of the chain corresponds to 1–18 (MYRISPIGRKSNFHSREK). A helical; Signal-anchor for type II membrane protein membrane pass occupies residues 19 to 39 (CLIGLVLVTLCFLCFGGIFLL). At 40-667 (PDNFGSDRVL…PVTLPVSNAS (628 aa)) the chain is on the lumenal side. The interval 154 to 192 (GDNAASQASSHPQSSAQQHNQQQPQLPLGGGGNDQAPDT) is disordered. Over residues 156 to 178 (NAASQASSHPQSSAQQHNQQQPQ) the composition is skewed to low complexity. The N-linked (GlcNAc...) asparagine glycan is linked to Asn-278. Cys-483 and Cys-515 are disulfide-bonded. Glu-529 (proton donor) is an active-site residue. Thr-640 contacts Ca(2+).

Belongs to the glycosyl hydrolase 47 family. Requires Ca(2+) as cofactor. Mg(2+) serves as cofactor. As to expression, complex spatial distribution during embryogenesis, including expression in lobula plate giant neurons. Also expressed in adult wing and eyes.

Its subcellular location is the golgi apparatus membrane. The catalysed reaction is N(4)-(alpha-D-Man-(1-&gt;2)-alpha-D-Man-(1-&gt;2)-alpha-D-Man-(1-&gt;3)-[alpha-D-Man-(1-&gt;2)-alpha-D-Man-(1-&gt;3)-[alpha-D-Man-(1-&gt;2)-alpha-D-Man-(1-&gt;6)]-alpha-D-Man-(1-&gt;6)]-beta-D-Man-(1-&gt;4)-beta-D-GlcNAc-(1-&gt;4)-beta-D-GlcNAc)-L-asparaginyl-[protein] (N-glucan mannose isomer 9A1,2,3B1,2,3) + 4 H2O = N(4)-(alpha-D-Man-(1-&gt;3)-[alpha-D-Man-(1-&gt;3)-[alpha-D-Man-(1-&gt;6)]-alpha-D-Man-(1-&gt;6)]-beta-D-Man-(1-&gt;4)-beta-D-GlcNAc-(1-&gt;4)-beta-D-GlcNAc)-L-asparaginyl-[protein] (N-glucan mannose isomer 5A1,2) + 4 beta-D-mannose. The enzyme catalyses N(4)-(alpha-D-Man-(1-&gt;2)-alpha-D-Man-(1-&gt;2)-alpha-D-Man-(1-&gt;3)-[alpha-D-Man-(1-&gt;3)-[alpha-D-Man-(1-&gt;2)-alpha-D-Man-(1-&gt;6)]-alpha-D-Man-(1-&gt;6)]-beta-D-Man-(1-&gt;4)-beta-D-GlcNAc-(1-&gt;4)-beta-D-GlcNAc)-L-asparaginyl-[protein] (N-glucan mannose isomer 8A1,2,3B1,3) + 3 H2O = N(4)-(alpha-D-Man-(1-&gt;3)-[alpha-D-Man-(1-&gt;3)-[alpha-D-Man-(1-&gt;6)]-alpha-D-Man-(1-&gt;6)]-beta-D-Man-(1-&gt;4)-beta-D-GlcNAc-(1-&gt;4)-beta-D-GlcNAc)-L-asparaginyl-[protein] (N-glucan mannose isomer 5A1,2) + 3 beta-D-mannose. It functions in the pathway protein modification; protein glycosylation. Involved in the maturation of Asn-linked oligosaccharides. Progressively trim alpha-1,2-linked mannose residues from Man(9)GlcNAc(2) to produce Man(5)GlcNAc(2). The protein is Mannosyl-oligosaccharide alpha-1,2-mannosidase IA of Drosophila melanogaster (Fruit fly).